The primary structure comprises 98 residues: NADH-ubiquinone oxidoreductase chain 4L (98 aa).

Helical transmembrane passes span 1-21 (MALT…GLLM), 29-49 (SLLC…LTIL), and 61-81 (IILL…LVMV).

The protein belongs to the complex I subunit 4L family. In terms of assembly, core subunit of respiratory chain NADH dehydrogenase (Complex I) which is composed of 45 different subunits.

Its subcellular location is the mitochondrion inner membrane. The enzyme catalyses a ubiquinone + NADH + 5 H(+)(in) = a ubiquinol + NAD(+) + 4 H(+)(out). In terms of biological role, core subunit of the mitochondrial membrane respiratory chain NADH dehydrogenase (Complex I) which catalyzes electron transfer from NADH through the respiratory chain, using ubiquinone as an electron acceptor. Part of the enzyme membrane arm which is embedded in the lipid bilayer and involved in proton translocation. The sequence is that of NADH-ubiquinone oxidoreductase chain 4L (MT-ND4L) from Pteropus dasymallus (Ryukyu flying fox).